Consider the following 90-residue polypeptide: Small ribosomal subunit protein uS15c (90 aa).

This sequence belongs to the universal ribosomal protein uS15 family. In terms of assembly, part of the 30S ribosomal subunit.

Its subcellular location is the plastid. The protein localises to the chloroplast. The chain is Small ribosomal subunit protein uS15c (rps15) from Citrus sinensis (Sweet orange).